We begin with the raw amino-acid sequence, 332 residues long: Cytoplasmic phosphatidylinositol transfer protein 1 (332 aa).

Residues Ser119, Ser122, Ser270, and Ser274 each carry the phosphoserine modification. Positions 272–281 (PSSAPSTPLS) are enriched in low complexity. The interval 272–332 (PSSAPSTPLS…SEKPCRPKSE (61 aa)) is disordered. Position 278 is a phosphothreonine (Thr278).

The protein belongs to the PtdIns transfer protein family. PI transfer class IIB subfamily. Widely expressed in brain, with expression in the gray matters of pre- and postnatal brains. In terms of tissue distribution, weakly expressed in brain and is rather confined to the embryonic stage.

Its subcellular location is the cytoplasm. The protein resides in the nucleus. It carries out the reaction a 1,2-diacyl-sn-glycero-3-phospho-(1D-myo-inositol)(in) = a 1,2-diacyl-sn-glycero-3-phospho-(1D-myo-inositol)(out). It catalyses the reaction a 1,2-diacyl-sn-glycero-3-phosphate(in) = a 1,2-diacyl-sn-glycero-3-phosphate(out). Functionally, catalyzes the transfer of phosphatidylinositol (PI) and phosphatidic acid (PA) between membranes. Binds PA derived from the phospholipase D signaling pathway and among the cellular PA species, preferably binds to the C16:0/16:1 and C16:1/18:1 PA species. Its function is as follows. Specifically binds to phosphatidylinositol but not to other phospholipids and may play a role in the phosphoinositide-mediated signaling in the neural development. This chain is Cytoplasmic phosphatidylinositol transfer protein 1 (Pitpnc1), found in Mus musculus (Mouse).